The following is a 340-amino-acid chain: MLTLGLESSCDETSCALVENGKILANRIASQDIHAAYGGVIPELASRAHLQIFPKLLAAVAQDAEVSLEDVELISVANTPGLIGALSVGVNFAKGLASGLKKTLIGVNHVEAHLYAACLEEPSIRFPALGLAISGAHTSLFLMPNATTFLLIGKTRDDAIGETFDKVARFLGLPYPGGQKLEELAQDGDEEAYPFSRAKVSGNDFSFSGLKTAVLYALKGNNSSAKAPFPEVSETQKRNIAASFQKAAFMTIAQKLPDIVKAFSCESLIVGGGVANNRYFRRLLNQTCSLPTYFPSSQLCSDNAAMIAGLGERLFCNQTYVSKEVIPCARYQWESACLSH.

The Fe cation site is built by H109 and H113. Residues 132-136, D165, G178, and N277 contribute to the substrate site; that span reads AISGA. Fe cation is bound at residue D302.

The protein belongs to the KAE1 / TsaD family. Fe(2+) serves as cofactor.

The protein localises to the cytoplasm. The enzyme catalyses L-threonylcarbamoyladenylate + adenosine(37) in tRNA = N(6)-L-threonylcarbamoyladenosine(37) in tRNA + AMP + H(+). In terms of biological role, required for the formation of a threonylcarbamoyl group on adenosine at position 37 (t(6)A37) in tRNAs that read codons beginning with adenine. Is involved in the transfer of the threonylcarbamoyl moiety of threonylcarbamoyl-AMP (TC-AMP) to the N6 group of A37, together with TsaE and TsaB. TsaD likely plays a direct catalytic role in this reaction. The polypeptide is tRNA N6-adenosine threonylcarbamoyltransferase (Chlamydia muridarum (strain MoPn / Nigg)).